The following is a 400-amino-acid chain: Subtilisin-like protease 11 (400 aa).

Positions 1-19 (MGLFTVVFTAIAALSAVDA) are cleaved as a signal peptide. Residues 20–117 (AELLRSPNSK…VEHDRYVYID (98 aa)) constitute a propeptide that is removed on maturation. The 82-residue stretch at 35–116 (SYLVVMKDSV…FVEHDRYVYI (82 aa)) folds into the Inhibitor I9 domain. Residues 127 to 400 (SWGLGRVSHR…NKLLYNGSGQ (274 aa)) form the Peptidase S8 domain. N-linked (GlcNAc...) asparagine glycosylation occurs at Asn138. Active-site charge relay system residues include Asp159 and His191. Residues Asn252, Asn336, and Asn337 are each glycosylated (N-linked (GlcNAc...) asparagine). Ser346 acts as the Charge relay system in catalysis. N-linked (GlcNAc...) asparagine glycans are attached at residues Asn388 and Asn396.

Belongs to the peptidase S8 family.

The protein localises to the secreted. In terms of biological role, secreted subtilisin-like serine protease with keratinolytic activity that contributes to pathogenicity. The protein is Subtilisin-like protease 11 (SUB11) of Arthroderma gypseum (strain ATCC MYA-4604 / CBS 118893) (Microsporum gypseum).